Here is a 621-residue protein sequence, read N- to C-terminus: 1-deoxy-D-xylulose-5-phosphate synthase (621 aa).

Thiamine diphosphate is bound by residues His80 and 121–123 (GHS). A Mg(2+)-binding site is contributed by Asp152. Residues 153 to 154 (GA), Asn181, Tyr288, and Glu371 each bind thiamine diphosphate. Asn181 is a binding site for Mg(2+).

The protein belongs to the transketolase family. DXPS subfamily. As to quaternary structure, homodimer. Mg(2+) serves as cofactor. The cofactor is thiamine diphosphate.

It catalyses the reaction D-glyceraldehyde 3-phosphate + pyruvate + H(+) = 1-deoxy-D-xylulose 5-phosphate + CO2. It functions in the pathway metabolic intermediate biosynthesis; 1-deoxy-D-xylulose 5-phosphate biosynthesis; 1-deoxy-D-xylulose 5-phosphate from D-glyceraldehyde 3-phosphate and pyruvate: step 1/1. Catalyzes the acyloin condensation reaction between C atoms 2 and 3 of pyruvate and glyceraldehyde 3-phosphate to yield 1-deoxy-D-xylulose-5-phosphate (DXP). The sequence is that of 1-deoxy-D-xylulose-5-phosphate synthase from Pectobacterium atrosepticum (strain SCRI 1043 / ATCC BAA-672) (Erwinia carotovora subsp. atroseptica).